A 920-amino-acid polypeptide reads, in one-letter code: Alpha-L-rhamnosidase (920 aa).

The first 19 residues, 1-19, serve as a signal peptide directing secretion; it reads MCVVRTFWFAVLTVIFAVS. The N-palmitoyl cysteine moiety is linked to residue C20. Residue C20 is the site of S-diacylglycerol cysteine attachment. Alpha-L-rhamnose is bound by residues D500, 504 to 506, D513, and W565; that span reads RDE. The active-site Proton donor is E506. Catalysis depends on E779, which acts as the Proton acceptor. Residue H800 participates in alpha-L-rhamnose binding.

This sequence belongs to the glycosyl hydrolase 78 family.

Its subcellular location is the cell membrane. It carries out the reaction Hydrolysis of terminal non-reducing alpha-L-rhamnose residues in alpha-L-rhamnosides.. In terms of biological role, alpha-L-rhamnosidase involved in ulvan degradation. Ulvan is the main polysaccharide component of the Ulvales (green seaweed) cell wall. It is composed of disaccharide building blocks comprising 3-sulfated rhamnose (Rha3S) linked to D-glucuronic acid (GlcA), L-iduronic acid (IduA), or D-xylose (Xyl). The enzyme is able to degrade p-nitrophenyl-alpha-L-rhamnopyranoside (PNP-Rha) in vitro. Incubating the enzyme with the products obtained after degradation with ulvan lyase and beta-glucuronyl hydrolase (i.e. the trisaccharides beta-alpha-L-Rha3S-IduA-Rha3S and beta-alpha-L-Rha3S-GlcA-Rha3S) showed no degradation, suggesting that the enzyme is active on neutral rhamnose and that desulfation of the oligosaccharide must be achieved before cleavage of rhamnose. The sequence is that of Alpha-L-rhamnosidase from Alteromonas sp. (strain LOR).